Reading from the N-terminus, the 310-residue chain is Ribose-phosphate pyrophosphokinase (310 aa).

ATP contacts are provided by residues 34-36 (DME) and 93-94 (RQ). 2 residues coordinate Mg(2+): His127 and Asp167. Lys190 is an active-site residue. D-ribose 5-phosphate-binding positions include Arg192, Asp216, and 220-224 (DSGGT).

The protein belongs to the ribose-phosphate pyrophosphokinase family. Class I subfamily. As to quaternary structure, homohexamer. Requires Mg(2+) as cofactor.

The protein resides in the cytoplasm. It carries out the reaction D-ribose 5-phosphate + ATP = 5-phospho-alpha-D-ribose 1-diphosphate + AMP + H(+). The protein operates within metabolic intermediate biosynthesis; 5-phospho-alpha-D-ribose 1-diphosphate biosynthesis; 5-phospho-alpha-D-ribose 1-diphosphate from D-ribose 5-phosphate (route I): step 1/1. Involved in the biosynthesis of the central metabolite phospho-alpha-D-ribosyl-1-pyrophosphate (PRPP) via the transfer of pyrophosphoryl group from ATP to 1-hydroxyl of ribose-5-phosphate (Rib-5-P). In Granulibacter bethesdensis (strain ATCC BAA-1260 / CGDNIH1), this protein is Ribose-phosphate pyrophosphokinase.